We begin with the raw amino-acid sequence, 414 residues long: Enolase (414 aa).

Q162 is a (2R)-2-phosphoglycerate binding site. E204 functions as the Proton donor in the catalytic mechanism. D239, E280, and D307 together coordinate Mg(2+). Positions 332, 361, 362, and 383 each coordinate (2R)-2-phosphoglycerate. The Proton acceptor role is filled by K332.

The protein belongs to the enolase family. Mg(2+) serves as cofactor.

Its subcellular location is the cytoplasm. It localises to the secreted. The protein localises to the cell surface. The catalysed reaction is (2R)-2-phosphoglycerate = phosphoenolpyruvate + H2O. Its pathway is carbohydrate degradation; glycolysis; pyruvate from D-glyceraldehyde 3-phosphate: step 4/5. Catalyzes the reversible conversion of 2-phosphoglycerate (2-PG) into phosphoenolpyruvate (PEP). It is essential for the degradation of carbohydrates via glycolysis. This is Enolase from Campylobacter jejuni subsp. jejuni serotype O:2 (strain ATCC 700819 / NCTC 11168).